The chain runs to 266 residues: Glucosamine-6-phosphate deaminase (266 aa).

D72 (proton acceptor; for enolization step) is an active-site residue. D141 functions as the For ring-opening step in the catalytic mechanism. The active-site Proton acceptor; for ring-opening step is H143. E148 functions as the For ring-opening step in the catalytic mechanism.

This sequence belongs to the glucosamine/galactosamine-6-phosphate isomerase family. NagB subfamily. In terms of assembly, homohexamer.

It carries out the reaction alpha-D-glucosamine 6-phosphate + H2O = beta-D-fructose 6-phosphate + NH4(+). It participates in amino-sugar metabolism; N-acetylneuraminate degradation; D-fructose 6-phosphate from N-acetylneuraminate: step 5/5. Allosterically activated by N-acetylglucosamine 6-phosphate (GlcNAc6P). Functionally, catalyzes the reversible isomerization-deamination of glucosamine 6-phosphate (GlcN6P) to form fructose 6-phosphate (Fru6P) and ammonium ion. This is Glucosamine-6-phosphate deaminase from Salmonella arizonae (strain ATCC BAA-731 / CDC346-86 / RSK2980).